The following is a 517-amino-acid chain: Cytochrome P450 CYP72A616 (517 aa).

A helical transmembrane segment spans residues 5-25 (VLGALAALLAAAAAWVMRAAA). Cysteine 465 serves as a coordination point for heme.

It belongs to the cytochrome P450 family. Mainly expressed in leaves and, at low levels, in roots, fruits and stems.

The protein resides in the membrane. It participates in steroid metabolism; cholesterol metabolism. Involved in the biosynthesis of spiroketal steroid and saponin natural products from cholesterol such as diosgenin and analogs (e.g. furostanol and spirostanol), plant defense compounds used as main precursors for the industrial production of steroid hormones. During the 5,6-spiroketalization of cholesterol, may catalyze the 27-monohydroxylation of furostanol-type steroid to an intermediate product that undergoes a stereospecific formation of the terminal heterocycle to yield diosgenin. The sequence is that of Cytochrome P450 CYP72A616 from Paris polyphylla (Daiswa polyphylla).